The chain runs to 206 residues: N-(5'-phosphoribosyl)anthranilate isomerase (206 aa).

It belongs to the TrpF family.

It carries out the reaction N-(5-phospho-beta-D-ribosyl)anthranilate = 1-(2-carboxyphenylamino)-1-deoxy-D-ribulose 5-phosphate. Its pathway is amino-acid biosynthesis; L-tryptophan biosynthesis; L-tryptophan from chorismate: step 3/5. The polypeptide is N-(5'-phosphoribosyl)anthranilate isomerase (Chlamydia caviae (strain ATCC VR-813 / DSM 19441 / 03DC25 / GPIC) (Chlamydophila caviae)).